Consider the following 1836-residue polypeptide: Sodium channel protein type 4 subunit alpha (1836 aa).

Topologically, residues 1–131 are cytoplasmic; it reads MARPSLCTLV…RGAIKVLIHA (131 aa). Basic and acidic residues predominate over residues 39–60; it reads LQRNKQMEIEEPERKPRSDLEA. Residues 39-63 form a disordered region; it reads LQRNKQMEIEEPERKPRSDLEAGKN. An I repeat occupies 113–454; that stretch reads LLSPFSVVRR…VVAMAYAEQN (342 aa). The chain crosses the membrane as a helical span at residues 132–150; sequence LFSMFIMITILTNCVFMTM. Over 151–157 the chain is Extracellular; sequence SDPPPWS. A helical transmembrane segment spans residues 158 to 178; the sequence is KNVEYTFTGIYTFESLIKILA. Residues 179–192 are Cytoplasmic-facing; the sequence is RGFCVDDFTFLRDP. The helical transmembrane segment at 193–210 threads the bilayer; the sequence is WNWLDFSVIMMAYLTEFV. Residues 211–216 lie on the Extracellular side of the membrane; sequence DLGNIS. A glycan (N-linked (GlcNAc...) asparagine) is linked at N214. A helical transmembrane segment spans residues 217–233; the sequence is ALRTFRVLRALKTITVI. Residues 234–252 lie on the Cytoplasmic side of the membrane; that stretch reads PGLKTIVGALIQSVKKLSD. Residues 253-272 traverse the membrane as a helical segment; the sequence is VMILTVFCLSVFALVGLQLF. Topologically, residues 273 to 391 are extracellular; that stretch reads MGNLRQKCVR…PNYGYTSYDT (119 aa). C280 and C360 are oxidised to a cystine. N288, N291, N297, N303, N315, N321, N333, and N362 each carry an N-linked (GlcNAc...) asparagine glycan. Cysteines 369 and 375 form a disulfide. The pore-forming intramembrane region spans 392 to 416; the sequence is FSWAFLALFRLMTQDYWENLFQLTL. Over 417 to 423 the chain is Extracellular; the sequence is RAAGKTY. Residues 424 to 444 form a helical membrane-spanning segment; it reads MIFFVVIIFLGSFYLINLILA. Topologically, residues 445 to 578 are cytoplasmic; sequence VVAMAYAEQN…NIIHLIVMDP (134 aa). A disordered region spans residues 493 to 530; the sequence is GGEADGDPAHGKDCNGSLDTSQGEKGAPRQSSSGDSGI. Residues 509–528 are compositionally biased toward polar residues; the sequence is SLDTSQGEKGAPRQSSSGDS. One copy of the II repeat lies at 560-832; that stretch reads CCAPWLKFKN…QIAIGRIKLG (273 aa). The helical transmembrane segment at 579-597 threads the bilayer; that stretch reads FVDLGITICIVLNTLFMAM. At 598–608 the chain is on the extracellular side; it reads EHYPMTEHFDN. A helical transmembrane segment spans residues 609-628; that stretch reads VLTVGNLVFTGIFTAEMVLK. Topologically, residues 629 to 642 are cytoplasmic; sequence LIAMDPYEYFQQGW. Residues 643-662 traverse the membrane as a helical segment; that stretch reads NIFDSIIVTLSLVELGLANV. At 663–664 the chain is on the extracellular side; that stretch reads QG. A helical membrane pass occupies residues 665 to 682; sequence LSVLRSFRLLRVFKLAKS. Topologically, residues 683–698 are cytoplasmic; it reads WPTLNMLIKIIGNSVG. Residues 699–717 form a helical membrane-spanning segment; the sequence is ALGNLTLVLAIIVFIFAVV. Residues 718–746 lie on the Extracellular side of the membrane; it reads GMQLFGKSYKECVCKIALDCNLPRWHMHD. Cysteines 731 and 737 form a disulfide. Positions 747–767 form an intramembrane region, pore-forming; the sequence is FFHSFLIVFRILCGEWIETMW. The Extracellular segment spans residues 768-778; sequence DCMEVAGQAMC. Cysteines 769 and 778 form a disulfide. The chain crosses the membrane as a helical span at residues 779–797; it reads LTVFLMVMVIGNLVVLNLF. The Cytoplasmic segment spans residues 798–1032; it reads LALLLSSFSA…ACFKIVEHNW (235 aa). Disordered regions lie at residues 863-885 and 930-992; these read GAGE…PPEE and ESDL…QPEE. Residues 876–885 show a composition bias toward basic and acidic residues; it reads EDEKKEPPEE. 2 stretches are compositionally biased toward acidic residues: residues 930–947 and 975–992; these read ESDL…FSEP and EDPE…QPEE. An III repeat occupies 1013-1326; it reads RGKKWWTLRR…KKYYNAMKKL (314 aa). A helical transmembrane segment spans residues 1033–1050; the sequence is FETFIVFMILLSSGALAF. The Extracellular segment spans residues 1051–1063; sequence EDIYIEQRRVIRT. Residues 1064–1082 traverse the membrane as a helical segment; it reads ILEYADKVFTYIFIMEMLL. The Cytoplasmic segment spans residues 1083–1096; sequence KWVAYGFKVYFTNA. The helical transmembrane segment at 1097-1115 threads the bilayer; it reads WCWLDFLIVDVSIISLVAN. Residues 1116 to 1123 lie on the Extracellular side of the membrane; that stretch reads WLGYSELG. A helical membrane pass occupies residues 1124–1142; it reads PIKSLRTLRALRPLRALSR. Residues 1143 to 1159 lie on the Cytoplasmic side of the membrane; sequence FEGMRVVVNALLGAIPS. A helical transmembrane segment spans residues 1160-1179; the sequence is IMNVLLVCLIFWLIFSIMGV. Residues 1180 to 1230 are Extracellular-facing; it reads NLFAGKFYYCINTTTSERFDISEVNNKSECESLMHTGQVRWLNVKVNYDNV. A disulfide bridge links C1189 with C1209. Residues N1191 and N1205 are each glycosylated (N-linked (GlcNAc...) asparagine). An intramembrane region (pore-forming) is located at residues 1231–1252; sequence GLGYLSLLQVATFKGWMDIMYA. Residues 1253–1269 are Extracellular-facing; it reads AVDSREKEEQPQYEVNL. The chain crosses the membrane as a helical span at residues 1270-1291; the sequence is YMYLYFVIFIIFGSFFTLNLFI. Residues 1292–1354 lie on the Cytoplasmic side of the membrane; it reads GVIIDNFNQQ…MVYDLVTKQA (63 aa). Positions 1310 to 1312 are important for rapid channel inactivation; sequence IFM. The IV repeat unit spans residues 1335 to 1633; it reads IPRPQNKIQG…WEKFDPDATQ (299 aa). Residues 1355–1372 traverse the membrane as a helical segment; that stretch reads FDITIMILICLNMVTMMV. The Extracellular portion of the chain corresponds to 1373–1383; that stretch reads ETDNQSQLKVD. A helical membrane pass occupies residues 1384–1402; that stretch reads ILYNINMIFIIIFTGECVL. Residues 1403-1414 lie on the Cytoplasmic side of the membrane; sequence KMLALRQYYFTV. The helical transmembrane segment at 1415–1432 threads the bilayer; it reads GWNIFDFVVVILSIVGLA. The Extracellular segment spans residues 1433-1445; that stretch reads LSDLIQKYFVSPT. The chain crosses the membrane as a helical span at residues 1446-1462; sequence LFRVIRLARIGRVLRLI. The Cytoplasmic segment spans residues 1463–1481; that stretch reads RGAKGIRTLLFALMMSLPA. The chain crosses the membrane as a helical span at residues 1482 to 1499; sequence LFNIGLLLFLVMFIYSIF. The Extracellular segment spans residues 1500 to 1521; that stretch reads GMSNFAYVKKESGIDDMFNFET. Residues 1522–1544 constitute an intramembrane region (pore-forming); that stretch reads FGNSIICLFEITTSAGWDGLLNP. Over 1545-1574 the chain is Extracellular; that stretch reads ILNSGPPDCDPNLENPGTSVKGDCGNPSIG. A disulfide bridge connects residues C1553 and C1568. The helical transmembrane segment at 1575-1597 threads the bilayer; the sequence is ICFFCSYIIISFLIVVNMYIAII. Over 1598–1836 the chain is Cytoplasmic; it reads LENFNVATEE…VRPGVKESLV (239 aa). The 30-residue stretch at 1727-1756 folds into the IQ domain; sequence EEVCAIKIQRAYRRHLLQRSMKQASYMYRH. A disordered region spans residues 1778–1836; the sequence is KMYGHENGNSSSPSPEEKGEAGDAGPTMGLMPISPSDTAWPPAPPPGQTVRPGVKESLV.

It belongs to the sodium channel (TC 1.A.1.10) family. Nav1.4/SCN4A subfamily. The Nav1.4 voltage-gated sodium channel consists of an ion-conducting alpha subunit SCN4A which is functional on its own and a regulatory beta subunit SCN1B. SCN1B strongly enhances the presence of SCN4A at the cell surface. SCN1B is also required for rapid channel inactivation and recovery after inactivation. It prevents the decrease of channel activity in response to repetitive, high-frequency depolarizations. Interacts with the syntrophins SNTA1, SNTB1 and SNTB2 (via PDZ domain); probably links SCN4A to the actin cytoskeleton and the extracellular matrix via the dystrophin-associated protein complex and regulates its localization in muscle cells. Interacts with TMEM233; probable regulator of the channel.

The protein localises to the cell membrane. The catalysed reaction is Na(+)(in) = Na(+)(out). The channel is inhibited by tetrodotoxin and saxitoxin. Inhibited by the conotoxin GVIIJ. Functionally, pore-forming subunit of Nav1.4, a voltage-gated sodium (Nav) channel that directly mediates the depolarizing phase of action potentials in excitable membranes. Navs, also called VGSCs (voltage-gated sodium channels) or VDSCs (voltage-dependent sodium channels), operate by switching between closed and open conformations depending on the voltage difference across the membrane. In the open conformation they allow Na(+) ions to selectively pass through the pore, along their electrochemical gradient. The influx of Na+ ions provokes membrane depolarization, initiating the propagation of electrical signals throughout cells and tissues. Highly expressed in skeletal muscles, Nav1.4 generates the action potential crucial for muscle contraction. This chain is Sodium channel protein type 4 subunit alpha, found in Homo sapiens (Human).